The sequence spans 285 residues: Ribonuclease H1 (285 aa).

Residues 72–122 (RSSSSPDGSKGQESAHVQKLQVKTSKRPREPLGEEEEPPEPGAKHTRQDTE) are disordered. The RNase H type-1 domain maps to 135–281 (MGESVVVYTD…ADRLAREGAK (147 aa)). Mg(2+)-binding residues include Asp144, Glu185, Asp209, and Asp273.

Belongs to the RNase H family. As to quaternary structure, monomer. Requires Mg(2+) as cofactor.

The protein localises to the cytoplasm. The catalysed reaction is Endonucleolytic cleavage to 5'-phosphomonoester.. In the presence of magnesium, manganese is inhibitory. In terms of biological role, endonuclease that specifically degrades the RNA of RNA-DNA hybrids. Plays a role in RNA polymerase II (RNAp II) transcription termination by degrading R-loop RNA-DNA hybrid formation at G-rich pause sites located downstream of the poly(A) site and behind the elongating RNAp II. This chain is Ribonuclease H1 (Rnaseh1), found in Rattus norvegicus (Rat).